The sequence spans 702 residues: Elongation factor G (702 aa).

Positions 8–286 (DKVRNIGIIA…AVVEYLPSPL (279 aa)) constitute a tr-type G domain. Residues 17 to 24 (AHIDAGKT), 85 to 89 (DTPGH), and 139 to 142 (NKMD) contribute to the GTP site.

It belongs to the TRAFAC class translation factor GTPase superfamily. Classic translation factor GTPase family. EF-G/EF-2 subfamily.

It localises to the cytoplasm. Functionally, catalyzes the GTP-dependent ribosomal translocation step during translation elongation. During this step, the ribosome changes from the pre-translocational (PRE) to the post-translocational (POST) state as the newly formed A-site-bound peptidyl-tRNA and P-site-bound deacylated tRNA move to the P and E sites, respectively. Catalyzes the coordinated movement of the two tRNA molecules, the mRNA and conformational changes in the ribosome. The polypeptide is Elongation factor G (Chloroflexus aurantiacus (strain ATCC 29366 / DSM 635 / J-10-fl)).